The following is a 98-amino-acid chain: NADH-ubiquinone oxidoreductase chain 4L (98 aa).

Helical transmembrane passes span 2–22 (TLVM…TLMF), 26–46 (LMST…MAVI), and 61–81 (IIIL…LAMV).

The protein belongs to the complex I subunit 4L family. As to quaternary structure, core subunit of respiratory chain NADH dehydrogenase (Complex I) which is composed of 45 different subunits.

The protein localises to the mitochondrion inner membrane. It carries out the reaction a ubiquinone + NADH + 5 H(+)(in) = a ubiquinol + NAD(+) + 4 H(+)(out). Functionally, core subunit of the mitochondrial membrane respiratory chain NADH dehydrogenase (Complex I) which catalyzes electron transfer from NADH through the respiratory chain, using ubiquinone as an electron acceptor. Part of the enzyme membrane arm which is embedded in the lipid bilayer and involved in proton translocation. The polypeptide is NADH-ubiquinone oxidoreductase chain 4L (MT-ND4L) (Nyctomys sumichrasti (Sumichrast's vesper rat)).